The following is a 215-amino-acid chain: NADH-quinone oxidoreductase subunit C (215 aa).

It belongs to the complex I 30 kDa subunit family. NDH-1 is composed of 14 different subunits. Subunits NuoB, C, D, E, F, and G constitute the peripheral sector of the complex.

It localises to the cell inner membrane. It carries out the reaction a quinone + NADH + 5 H(+)(in) = a quinol + NAD(+) + 4 H(+)(out). NDH-1 shuttles electrons from NADH, via FMN and iron-sulfur (Fe-S) centers, to quinones in the respiratory chain. The immediate electron acceptor for the enzyme in this species is believed to be ubiquinone. Couples the redox reaction to proton translocation (for every two electrons transferred, four hydrogen ions are translocated across the cytoplasmic membrane), and thus conserves the redox energy in a proton gradient. The protein is NADH-quinone oxidoreductase subunit C of Methylobacterium sp. (strain 4-46).